The following is a 222-amino-acid chain: Superoxide dismutase [Mn], mitochondrial (222 aa).

A mitochondrion-targeting transit peptide spans methionine 1–glutamine 24. Histidine 50 provides a ligand contact to Mn(2+). Residue tyrosine 58 is modified to 3'-nitrotyrosine. An N6-acetyllysine; alternate mark is found at lysine 68 and lysine 75. N6-succinyllysine; alternate occurs at positions 68 and 75. Position 98 (histidine 98) interacts with Mn(2+). The residue at position 114 (lysine 114) is an N6-acetyllysine. An N6-acetyllysine; alternate mark is found at lysine 122 and lysine 130. An N6-succinyllysine; alternate mark is found at lysine 122 and lysine 130. Residues aspartate 183 and histidine 187 each coordinate Mn(2+). Lysine 202 is modified (N6-acetyllysine).

The protein belongs to the iron/manganese superoxide dismutase family. In terms of assembly, homotetramer. Mn(2+) serves as cofactor. Nitrated under oxidative stress. Nitration coupled with oxidation inhibits the catalytic activity. In terms of processing, acetylation at Lys-122 decreases enzymatic activity. Deacetylated by SIRT3 upon exposure to ionizing radiations or after long fasting. Post-translationally, polyubiquitinated; leading to proteasomal degradation. Deubiquitinated by USP36 which increases protein stability.

The protein localises to the mitochondrion matrix. It catalyses the reaction 2 superoxide + 2 H(+) = H2O2 + O2. Destroys superoxide anion radicals which are normally produced within the cells and which are toxic to biological systems. The protein is Superoxide dismutase [Mn], mitochondrial (SOD2) of Macaca fascicularis (Crab-eating macaque).